The following is a 550-amino-acid chain: MAAKDVVFGDSARAKMVEGVNILANAVKVTLGPKGRNVVLERSFGGPTVTKDGVSVAKEIELKDKLQNMGAQMVKEVASKTSDNAGDGTTTATVLAQSIVREGMKYVASGMNPMDLKRGIDKAVAAAVEELKKISKPCTTNKEIAQVGAISANSDSSIGDRIAEAMDKVGKEGVITVEDGKSLADELDVVEGMQFDRGYLSPYFINNPDKQVAVLENPFVLLHDKKVSNIRDLLPVLEQVAKAGRPLLIIAEDVEGEALATLVVNNIRGILKTVAVKAPGFGDRRKAMLEDIAILTGGQVIAEETGLTLEKATLAELGQAKRIEVGKENTTIIDGAGEAVNIEARVKQIRTQIEEATSDYDREKLQERVAKLAGGVAVIKVGAATEVEMKEKKARVEDALHATRAAVEEGIVPGGGVALIRARTAIASLTGVNADQNAGIKIVLRAMEEPLRQIVTNGGEEASVVVAAVAAGKGNYGYNAATGEYVDMVEAGVVDPTKVTRTALQNAASVAGLLLTTDAAVAELPKEDAPMPGGMPGGMGGMGMGMGMDM.

ATP-binding positions include 30–33 (TLGP), Lys51, 87–91 (DGTTT), Gly415, 479–481 (NAA), and Asp495.

The protein belongs to the chaperonin (HSP60) family. Forms a cylinder of 14 subunits composed of two heptameric rings stacked back-to-back. Interacts with the co-chaperonin GroES.

The protein localises to the cytoplasm. It carries out the reaction ATP + H2O + a folded polypeptide = ADP + phosphate + an unfolded polypeptide.. Functionally, together with its co-chaperonin GroES, plays an essential role in assisting protein folding. The GroEL-GroES system forms a nano-cage that allows encapsulation of the non-native substrate proteins and provides a physical environment optimized to promote and accelerate protein folding. In Burkholderia mallei (strain NCTC 10247), this protein is Chaperonin GroEL.